We begin with the raw amino-acid sequence, 362 residues long: Fructose-bisphosphate aldolase (362 aa).

D33 is a dihydroxyacetone phosphate binding site. 2 residues coordinate D-glyceraldehyde 3-phosphate: S35 and T38. R42 contributes to the beta-D-fructose 1,6-bisphosphate binding site. A D-glyceraldehyde 3-phosphate-binding site is contributed by K106. Residue K145 coordinates dihydroxyacetone phosphate. Position 188 (E188) interacts with D-glyceraldehyde 3-phosphate. E188 functions as the Proton acceptor in the catalytic mechanism. The dihydroxyacetone phosphate site is built by K230, S272, and G273. K230 (schiff-base intermediate with dihydroxyacetone phosphate) is an active-site residue. Beta-D-fructose 1,6-bisphosphate contacts are provided by residues 272–274 (SGG) and S300. Residues G302 and R303 each coordinate dihydroxyacetone phosphate. Beta-D-fructose 1,6-bisphosphate is bound at residue R303.

Belongs to the class I fructose-bisphosphate aldolase family. In terms of assembly, homotetramer. Interacts with TRAP (via cytoplasmic domain); the interaction prevents substrate binding and thereby inhibits aldolase activity. Interacts with MTRAP (via cytoplasmic domain); MTRAP phosphorylation may increase the binding to FBPA. Interact with RH1 (via cytoplasmic domain). Interacts with RH2b (via cytoplasmic domain). Interacts with RH4 (via cytoplasmic domain). Interacts with AMA1 (via cytoplasmic domain); the interaction is weak, however it may be increased upon AMA1 phosphorylation. Interacts with EBA140 (via cytoplasmic domain); the interaction is weak. Interacts with EBA175 (via cytoplasmic domain); the interaction is weak. Interacts with EBA181 (via cytoplasmic domain); the interaction is weak. Interacts with G-actin and F-actin. May interact with ACT2/actin II; the interaction inhibits FBPA catalytic activity. Interacts with human SLC4A1/band 3 (via N-terminus); the interaction inhibits FBPA catalytic activity.

The protein resides in the cytoplasm. It localises to the membrane. It is found in the host cell membrane. It catalyses the reaction beta-D-fructose 1,6-bisphosphate = D-glyceraldehyde 3-phosphate + dihydroxyacetone phosphate. The protein operates within carbohydrate degradation; glycolysis; D-glyceraldehyde 3-phosphate and glycerone phosphate from D-glucose: step 4/4. Its activity is regulated as follows. The cytoplasmic tail of TRAP and probably other adhesins acts as a competitive inhibitor as the binding sites of the glycolytic substrate fructose 1,6-bisphosphate and TRAP partially overlap. Inhibited by suramin, an antiparasitic drug used to treat Trypanosome-mediated infection. Plays a key role in glycolysis by catalyzing the cleavage of fructose 1,6-bisphosphate into dihydroxyacetone phosphate and glyceraldehyde 3-phosphate. Independently of its catalytic activity, connects the actin filaments, and thus the actomyosin motor, to cell surface adhesins of the thrombospondin-related anonymous protein (TRAP), the erythrocyte binding ligand (EBL) and reticulocyte binding homolog (RH) protein families; this interaction is probably involved in transducing the motor force across the parasite surface required for sporozoite and ookinete gliding motility and merozoite invasion. Stimulates actin polymerisation. This Plasmodium falciparum (isolate K1 / Thailand) protein is Fructose-bisphosphate aldolase.